The chain runs to 1038 residues: Inner tegument protein (1038 aa).

The interaction with large tegument protein stretch occupies residues 545 to 1038 (WGITPPVDVG…VPGNTSGSDP (494 aa)).

This sequence belongs to the herpesviridae inner tegument protein family. As to quaternary structure, interacts (via C-terminus) with the large tegument protein/LTP (via N-terminus).

It is found in the virion tegument. Its subcellular location is the host cytoplasm. It localises to the host nucleus. The protein resides in the host Golgi apparatus. The protein localises to the host trans-Golgi network. Plays an essential role in cytoplasmic secondary envelopment during viral egress. Interacts with the capsid via the large tegument protein/LTP and participates in its transport to the host trans-Golgi network (TGN) where secondary envelopment occurs. Modulates tegumentation and capsid accumulation at the viral assembly complex. The sequence is that of Inner tegument protein (21) from Homo sapiens (Human).